Consider the following 254-residue polypeptide: Protein odd-skipped-related 2 (254 aa).

C2H2-type zinc fingers lie at residues 124–146 (FICK…ERTH), 152–174 (YSCD…KYIH), and 180–202 (FKCE…RATH).

It belongs to the Odd C2H2-type zinc-finger protein family.

The protein localises to the nucleus. Its function is as follows. May function as transcription regulator. Required for morphogenesis and function of the digestive tract. This chain is Protein odd-skipped-related 2, found in Caenorhabditis elegans.